Consider the following 279-residue polypeptide: DegV domain-containing protein lin1977 (279 aa).

The 275-residue stretch at I4 to T278 folds into the DegV domain. Hexadecanoate is bound by residues S62 and S94.

Functionally, may bind long-chain fatty acids, such as palmitate, and may play a role in lipid transport or fatty acid metabolism. The chain is DegV domain-containing protein lin1977 from Listeria innocua serovar 6a (strain ATCC BAA-680 / CLIP 11262).